The sequence spans 286 residues: NAD(P)H azoreductase (286 aa).

Residues 6–11 (GGTGTI), Arg31, and 136–141 (GFFMQN) contribute to the NADP(+) site.

Belongs to the NmrA-type oxidoreductase family. Azoreductase type 3 subfamily. Monomer.

In terms of biological role, catalyzes the reductive cleavage of azo bond in aromatic azo compounds to the corresponding amines. Uses preferentially NADPH rather than NADH as an electron donor for its activity. The enzyme reductively cleaved Orange II and carboxy-Orange II, and can also reduce several sulfonated structural analogs, which carry a hydroxy group in the 2 position of the naphthol ring. This is NAD(P)H azoreductase (azoB) from Xenophilus azovorans.